A 201-amino-acid polypeptide reads, in one-letter code: Retinol binding protein 4 (201 aa).

An N-terminal signal peptide occupies residues 1 to 18; it reads MAWVWALVLLAALGSARA. 3 disulfide bridges follow: Cys-22–Cys-178, Cys-88–Cys-192, and Cys-138–Cys-147. Position 116 (Gln-116) interacts with substrate. Arg-139 is modified (omega-N-methylarginine).

The protein belongs to the calycin superfamily. Lipocalin family. Interacts with TTR. Interaction with TTR prevents its loss by filtration through the kidney glomeruli. Interacts with STRA6. Highly expressed in liver. Also expressed in adipose tissue. Expressed by endometrium from days 16-25 and by unattached chorioallantois from days 30-36 during pregnancy.

The protein resides in the secreted. Functionally, retinol-binding protein that mediates retinol transport in blood plasma. Delivers retinol from the liver stores to the peripheral tissues. Transfers the bound all-trans retinol to STRA6, that then facilitates retinol transport across the cell membrane. The chain is Retinol binding protein 4 from Felis catus (Cat).